We begin with the raw amino-acid sequence, 110 residues long: UPF0251 protein PYRAB12660 (110 aa).

Belongs to the UPF0251 family.

This chain is UPF0251 protein PYRAB12660, found in Pyrococcus abyssi (strain GE5 / Orsay).